A 629-amino-acid polypeptide reads, in one-letter code: tRNA uridine 5-carboxymethylaminomethyl modification enzyme MnmG (629 aa).

Residues 13–18 (GGGHAG), V125, and S180 each bind FAD. Position 273–287 (273–287 (GPRYCPSIEDKVMRF)) interacts with NAD(+). Q370 serves as a coordination point for FAD.

Belongs to the MnmG family. As to quaternary structure, homodimer. Heterotetramer of two MnmE and two MnmG subunits. Requires FAD as cofactor.

It localises to the cytoplasm. In terms of biological role, NAD-binding protein involved in the addition of a carboxymethylaminomethyl (cmnm) group at the wobble position (U34) of certain tRNAs, forming tRNA-cmnm(5)s(2)U34. The sequence is that of tRNA uridine 5-carboxymethylaminomethyl modification enzyme MnmG from Sodalis glossinidius (strain morsitans).